The sequence spans 115 residues: uncharacterized protein (115 aa).

2 helical membrane passes run 11-31 and 85-105; these read FLYLIVAMVILCPLGILLVWN and GYIISAIVGVILCVGAYYALI.

To M.thermoautotrophicum MTH1706.

It is found in the cell membrane. This is an uncharacterized protein from Methanocaldococcus jannaschii (strain ATCC 43067 / DSM 2661 / JAL-1 / JCM 10045 / NBRC 100440) (Methanococcus jannaschii).